We begin with the raw amino-acid sequence, 85 residues long: Large ribosomal subunit protein bL27 (85 aa).

The tract at residues 1-20 is disordered; the sequence is MAHKKAGGSTRNGRDSEAKR.

Belongs to the bacterial ribosomal protein bL27 family.

The polypeptide is Large ribosomal subunit protein bL27 (Citrobacter koseri (strain ATCC BAA-895 / CDC 4225-83 / SGSC4696)).